Here is a 174-residue protein sequence, read N- to C-terminus: Achaete-scute homolog 3 (174 aa).

The tract at residues 92-105 (AFIRKRNERERQRV) is basic motif. The bHLH domain occupies 92-144 (AFIRKRNERERQRVKCVNEGYARLRRHLPEDYLEKRLSKVETLRAAIKYISYL). The segment at 106 to 144 (KCVNEGYARLRRHLPEDYLEKRLSKVETLRAAIKYISYL) is helix-loop-helix motif. The interval 153–174 (SETKKNPRTASCGSLDPALRVI) is disordered.

As to quaternary structure, efficient DNA binding requires dimerization with another bHLH protein. Expressed in the salivary duct cells. Also expressed at lower levels in testis and epididymis. Expressed in the olfactory epithelium (OE), in a subset of apical microvillar cells.

It is found in the nucleus. Transcriptional repressor. Inhibits myogenesis. Plays a role in progenitor cells which differentiate into ductal and acinar, but not myoepithelial, cell lineages in the salivary glands. Involved in the functions of the microvillar cells and Bowman's glands and probably, in a non-cell-autonomous manner, in the development or regeneration of a complete olfactory epithelium (OE). The polypeptide is Achaete-scute homolog 3 (Ascl3) (Mus musculus (Mouse)).